Reading from the N-terminus, the 328-residue chain is Formimidoylglutamase (328 aa).

Positions 133, 159, 161, 163, 253, and 255 each coordinate Mn(2+).

It belongs to the arginase family. Requires Mn(2+) as cofactor.

The enzyme catalyses N-formimidoyl-L-glutamate + H2O = formamide + L-glutamate. It functions in the pathway amino-acid degradation; L-histidine degradation into L-glutamate; L-glutamate from N-formimidoyl-L-glutamate (hydrolase route): step 1/1. Catalyzes the conversion of N-formimidoyl-L-glutamate to L-glutamate and formamide. This Streptococcus pyogenes serotype M3 (strain ATCC BAA-595 / MGAS315) protein is Formimidoylglutamase.